The sequence spans 356 residues: sn-glycerol-3-phosphate import ATP-binding protein UgpC (356 aa).

In terms of domain architecture, ABC transporter spans 4–235 (LKLQAVTKSW…PASLFVASFI (232 aa)). Residue 37–44 (GPSGCGKS) coordinates ATP.

The protein belongs to the ABC transporter superfamily. sn-glycerol-3-phosphate importer (TC 3.A.1.1.3) family. As to quaternary structure, the complex is composed of two ATP-binding proteins (UgpC), two transmembrane proteins (UgpA and UgpE) and a solute-binding protein (UgpB).

The protein resides in the cell inner membrane. It carries out the reaction sn-glycerol 3-phosphate(out) + ATP + H2O = sn-glycerol 3-phosphate(in) + ADP + phosphate + H(+). Functionally, part of the ABC transporter complex UgpBAEC involved in sn-glycerol-3-phosphate (G3P) import. Responsible for energy coupling to the transport system. This is sn-glycerol-3-phosphate import ATP-binding protein UgpC from Shigella boydii serotype 4 (strain Sb227).